Consider the following 109-residue polypeptide: Protein reprimo (109 aa).

N-linked (GlcNAc...) asparagine glycans are attached at residues Asn-7 and Asn-18. A helical membrane pass occupies residues 56–76 (VVQIAVMCVLSLTVVFGIFFL). Ser-98 is subject to Phosphoserine.

The protein belongs to the reprimo family.

Its subcellular location is the cytoplasm. The protein localises to the membrane. In terms of biological role, may be involved in the regulation of p53-dependent G2 arrest of the cell cycle. Seems to induce cell cycle arrest by inhibiting CDK1 activity and nuclear translocation of the CDC2 cyclin B1 complex. This is Protein reprimo (RPRM) from Homo sapiens (Human).